Consider the following 426-residue polypeptide: Glutamate-1-semialdehyde 2,1-aminomutase 2 (426 aa).

N6-(pyridoxal phosphate)lysine is present on Lys-265.

Belongs to the class-III pyridoxal-phosphate-dependent aminotransferase family. HemL subfamily. In terms of assembly, homodimer. Pyridoxal 5'-phosphate serves as cofactor.

Its subcellular location is the cytoplasm. The enzyme catalyses (S)-4-amino-5-oxopentanoate = 5-aminolevulinate. It participates in porphyrin-containing compound metabolism; protoporphyrin-IX biosynthesis; 5-aminolevulinate from L-glutamyl-tRNA(Glu): step 2/2. The sequence is that of Glutamate-1-semialdehyde 2,1-aminomutase 2 from Lachnoclostridium phytofermentans (strain ATCC 700394 / DSM 18823 / ISDg) (Clostridium phytofermentans).